Here is a 397-residue protein sequence, read N- to C-terminus: uncharacterized protein (397 aa).

Residues Cys47, Cys53, Cys56, and Cys131 each contribute to the [4Fe-4S] cluster site. Residues Gln235, Phe262, Glu282, and Asp328 each contribute to the S-adenosyl-L-methionine site. The Nucleophile role is filled by Cys354.

Belongs to the class I-like SAM-binding methyltransferase superfamily. RNA M5U methyltransferase family.

This is an uncharacterized protein from Zymomonas mobilis subsp. mobilis (strain ATCC 31821 / ZM4 / CP4).